The following is a 190-amino-acid chain: Peptidyl-tRNA hydrolase (190 aa).

TRNA is bound at residue Y19. H24 serves as the catalytic Proton acceptor. Residues Y72, N74, and N121 each contribute to the tRNA site.

It belongs to the PTH family.

It is found in the mitochondrion. It carries out the reaction an N-acyl-L-alpha-aminoacyl-tRNA + H2O = an N-acyl-L-amino acid + a tRNA + H(+). Peptidyl-tRNA hydrolase involved in the recycling of tRNA-Lys from diacetyl-lysyl-tRNA-Lys and is important for mitochondrial function. The chain is Peptidyl-tRNA hydrolase (PTH1) from Saccharomyces cerevisiae (strain ATCC 204508 / S288c) (Baker's yeast).